We begin with the raw amino-acid sequence, 113 residues long: Large ribosomal subunit protein uL18 (113 aa).

This sequence belongs to the universal ribosomal protein uL18 family. In terms of assembly, part of the 50S ribosomal subunit; part of the 5S rRNA/L5/L18/L25 subcomplex. Contacts the 5S and 23S rRNAs.

In terms of biological role, this is one of the proteins that bind and probably mediate the attachment of the 5S RNA into the large ribosomal subunit, where it forms part of the central protuberance. This Phocaeicola vulgatus (strain ATCC 8482 / DSM 1447 / JCM 5826 / CCUG 4940 / NBRC 14291 / NCTC 11154) (Bacteroides vulgatus) protein is Large ribosomal subunit protein uL18.